A 599-amino-acid chain; its full sequence is Elongation factor 4 (599 aa).

In terms of domain architecture, tr-type G spans 3 to 185 (KNIRNFSIIA…AIVERIPPPS (183 aa)). GTP-binding positions include 15–20 (DHGKST) and 132–135 (NKID).

Belongs to the TRAFAC class translation factor GTPase superfamily. Classic translation factor GTPase family. LepA subfamily.

The protein resides in the cell membrane. It catalyses the reaction GTP + H2O = GDP + phosphate + H(+). Its function is as follows. Required for accurate and efficient protein synthesis under certain stress conditions. May act as a fidelity factor of the translation reaction, by catalyzing a one-codon backward translocation of tRNAs on improperly translocated ribosomes. Back-translocation proceeds from a post-translocation (POST) complex to a pre-translocation (PRE) complex, thus giving elongation factor G a second chance to translocate the tRNAs correctly. Binds to ribosomes in a GTP-dependent manner. The polypeptide is Elongation factor 4 (Syntrophomonas wolfei subsp. wolfei (strain DSM 2245B / Goettingen)).